A 106-amino-acid chain; its full sequence is Small ribosomal subunit protein bS16 (106 aa).

The interval 84 to 106 (KREARNNPEKAVPRKERKAADGK) is disordered.

The chain is Small ribosomal subunit protein bS16 from Rhodopseudomonas palustris (strain ATCC BAA-98 / CGA009).